The primary structure comprises 473 residues: Serine/threonine-protein phosphatase T (473 aa).

TPR repeat units follow at residues 5 to 38, 40 to 72, and 73 to 106; these read ALELKNEANKFLKEGHIVQAIDLYTKAIELDSTN, ILYSNRSLAHLKSEDYGLAINDASKAIECDPEY, and AKAYFRRATAHIAIFQPKEAVGDFRKALALAPSD. The catalytic stretch occupies residues 159–472; the sequence is KQITKEFVED…MAYANGLLSG (314 aa). Mn(2+) contacts are provided by Asp-217, His-219, Asp-246, and Asn-278. Catalysis depends on His-279, which acts as the Proton donor/acceptor. Positions 327 and 404 each coordinate Mn(2+).

This sequence belongs to the PPP phosphatase family. PP-5 (PP-T) subfamily. It depends on Mg(2+) as a cofactor. Mn(2+) is required as a cofactor.

The protein localises to the nucleus. It catalyses the reaction O-phospho-L-seryl-[protein] + H2O = L-seryl-[protein] + phosphate. It carries out the reaction O-phospho-L-threonyl-[protein] + H2O = L-threonyl-[protein] + phosphate. Its function is as follows. Protein phosphatase that specifically binds to and dephosphorylates the molecular chaperone Hsp90. Dephosphorylation positively regulates the Hsp90 chaperone machinery. The sequence is that of Serine/threonine-protein phosphatase T (ppt1) from Schizosaccharomyces pombe (strain 972 / ATCC 24843) (Fission yeast).